We begin with the raw amino-acid sequence, 75 residues long: ATP synthase subunit epsilon, mitochondrial (75 aa).

A mitochondrion-targeting transit peptide spans 1-9; the sequence is MIRRSCALL.

Belongs to the eukaryotic ATPase epsilon family. In terms of assembly, F-type ATPases have 2 components, F(1) - the catalytic core - and F(o) - the membrane proton channel. F(1) has five subunits: alpha(3), beta(3), gamma(1), delta(1), epsilon(1), plus the additional subunit P18 (Tb427.05.1710) that is not present in F(1)F(o) ATP synthase from metazoa. Subunit P18 (Tb927.5.1710) interacts with the alpha subunit with a 1:1 stoichiometry; the interaction is direct. Subunit gamma is part of the central stalk. F(o) has three main subunits: a, b and c. The trypanosomal ATPase complex contains additional subunits that are not present in the F(1)F(o) ATP synthase from metazoa.

It is found in the mitochondrion. It localises to the mitochondrion inner membrane. Functionally, mitochondrial membrane ATP synthase (F(1)F(o) ATP synthase) produces ATP from ADP in the presence of a proton gradient across the membrane which is generated by electron transport complexes of the respiratory chain. F-type ATPases consist of two structural domains, F(1) - containing the extramembraneous catalytic core, and F(o) - containing the membrane proton channel, linked together by a central stalk and a peripheral stalk. During catalysis, ATP synthesis in the catalytic domain of F(1) is coupled via a rotary mechanism of the central stalk subunits to proton translocation. Subunits alpha and beta form the catalytic core in F(1). Rotation of the central stalk against the surrounding alpha(3)beta(3) subunits leads to hydrolysis of ATP in three separate catalytic sites on the beta subunits. Contrary to the procyclic, insect form that requires F(1)F(o) ATP synthase for ATP synthesis, the bloodstream form relies on ATP hydrolysis by F(1)F(o) ATP synthase to maintain its mitochondrial membrane potential. The polypeptide is ATP synthase subunit epsilon, mitochondrial (Trypanosoma brucei brucei).